The sequence spans 257 residues: tRNA pseudouridine synthase A (257 aa).

Asp52 functions as the Nucleophile in the catalytic mechanism. Position 111 (Tyr111) interacts with substrate.

The protein belongs to the tRNA pseudouridine synthase TruA family. Homodimer.

It catalyses the reaction uridine(38/39/40) in tRNA = pseudouridine(38/39/40) in tRNA. Its function is as follows. Formation of pseudouridine at positions 38, 39 and 40 in the anticodon stem and loop of transfer RNAs. The protein is tRNA pseudouridine synthase A of Dinoroseobacter shibae (strain DSM 16493 / NCIMB 14021 / DFL 12).